The chain runs to 540 residues: Acetyl-coenzyme A carboxylase carboxyl transferase subunit beta, chloroplastic (540 aa).

A disordered region spans residues 229-249 (YSDNGSSSIRTRTSTSSGSSY). The span at 233-248 (GSSSIRTRTSTSSGSS) shows a compositional bias: low complexity. A CoA carboxyltransferase N-terminal domain is found at 267–538 (LWVQCENCYA…TFHPLKSNKV (272 aa)). The Zn(2+) site is built by C271, C274, C290, and C293. Residues 271-293 (CENCYALNYNKLFRSKMNVCEQC) form a C4-type zinc finger.

The protein belongs to the AccD/PCCB family. In terms of assembly, acetyl-CoA carboxylase is a heterohexamer composed of biotin carboxyl carrier protein, biotin carboxylase and 2 subunits each of ACCase subunit alpha and ACCase plastid-coded subunit beta (accD). Requires Zn(2+) as cofactor.

The protein resides in the plastid. It localises to the chloroplast stroma. It carries out the reaction N(6)-carboxybiotinyl-L-lysyl-[protein] + acetyl-CoA = N(6)-biotinyl-L-lysyl-[protein] + malonyl-CoA. It participates in lipid metabolism; malonyl-CoA biosynthesis; malonyl-CoA from acetyl-CoA: step 1/1. Functionally, component of the acetyl coenzyme A carboxylase (ACC) complex. Biotin carboxylase (BC) catalyzes the carboxylation of biotin on its carrier protein (BCCP) and then the CO(2) group is transferred by the transcarboxylase to acetyl-CoA to form malonyl-CoA. The polypeptide is Acetyl-coenzyme A carboxylase carboxyl transferase subunit beta, chloroplastic (Amborella trichopoda).